We begin with the raw amino-acid sequence, 201 residues long: FMN-dependent NADH:quinone oxidoreductase (201 aa).

Residues Ser-9 and Met-93 to Phe-96 contribute to the FMN site.

It belongs to the azoreductase type 1 family. In terms of assembly, homodimer. FMN serves as cofactor.

It catalyses the reaction 2 a quinone + NADH + H(+) = 2 a 1,4-benzosemiquinone + NAD(+). The catalysed reaction is N,N-dimethyl-1,4-phenylenediamine + anthranilate + 2 NAD(+) = 2-(4-dimethylaminophenyl)diazenylbenzoate + 2 NADH + 2 H(+). Its function is as follows. Quinone reductase that provides resistance to thiol-specific stress caused by electrophilic quinones. In terms of biological role, also exhibits azoreductase activity. Catalyzes the reductive cleavage of the azo bond in aromatic azo compounds to the corresponding amines. The chain is FMN-dependent NADH:quinone oxidoreductase from Bradyrhizobium sp. (strain BTAi1 / ATCC BAA-1182).